Here is a 303-residue protein sequence, read N- to C-terminus: Small ribosomal subunit protein bS1m (303 aa).

Position 2 is an N-acetylserine (S2). Residues 2-13 (SFAQILRGSRAM) constitute a mitochondrion; not cleaved transit peptide.

Belongs to the bacterial ribosomal protein bS1 family. As to quaternary structure, component of the mitochondrial small ribosomal subunit (mt-SSU). Mature yeast 74S mitochondrial ribosomes consist of a small (37S) and a large (54S) subunit. The 37S small subunit contains a 15S ribosomal RNA (15S mt-rRNA) and at least 32 different proteins. The 54S large subunit contains a 21S rRNA (21S mt-rRNA) and at least 45 different proteins. This subunit is mutually exclusive with mug178/small ribosomal subunit protein L51-b.

The protein localises to the mitochondrion. Component of the mitochondrial ribosome (mitoribosome), a dedicated translation machinery responsible for the synthesis of mitochondrial genome-encoded proteins, including at least some of the essential transmembrane subunits of the mitochondrial respiratory chain. The mitoribosomes are attached to the mitochondrial inner membrane and translation products are cotranslationally integrated into the membrane. bS1m functionally interacts with the 5'-UTR of mitochondrial mRNAs. Plays an essential role in mitochondrial translation. The sequence is that of Small ribosomal subunit protein bS1m (mrp51) from Schizosaccharomyces pombe (strain 972 / ATCC 24843) (Fission yeast).